Consider the following 297-residue polypeptide: NADH-ubiquinone oxidoreductase chain 1 (297 aa).

9 consecutive transmembrane segments (helical) span residues 1-21 (MKSLIVALAIVLAVAFMTLAE), 34-54 (PNHVGFLGLLQPFADGIKLIL), 66-86 (WLFVLAPFLSFYLALLNWLVI), 99-119 (LSILLILAISSLGVYAIIYTG), 139-159 (VSYEIAMSLLVLTVVYMGATL), 170-190 (GTVLLWSLWPMAMIGFVAALA), 206-228 (LVAGFMTEHSAISFTFLFLGEYA), 235-257 (TVLNLMFLGFYNPLVIYLFIWIR), and 277-297 (LPFLIGFLMIQPSTLFVLDLF).

Belongs to the complex I subunit 1 family.

The protein localises to the mitochondrion inner membrane. It carries out the reaction a ubiquinone + NADH + 5 H(+)(in) = a ubiquinol + NAD(+) + 4 H(+)(out). Core subunit of the mitochondrial membrane respiratory chain NADH dehydrogenase (Complex I) that is believed to belong to the minimal assembly required for catalysis. Complex I functions in the transfer of electrons from NADH to the respiratory chain. The immediate electron acceptor for the enzyme is believed to be ubiquinone. The chain is NADH-ubiquinone oxidoreductase chain 1 from Hyaloraphidium curvatum (Lower fungus).